A 304-amino-acid chain; its full sequence is uncharacterized protein (304 aa).

Positions 1–22 are cleaved as a signal peptide; the sequence is MKKSLTLLILLLCSLLFSTVLS. The tract at residues 91 to 111 is disordered; it reads PAPAPTPESSDPDEPMKPDDS. N-linked (GlcNAc...) asparagine glycans are attached at residues N133, N160, N183, and N233. S282 is lipidated: GPI-anchor amidated serine. Residues 283–304 constitute a propeptide, removed in mature form; the sequence is SSHLFGVLPFLPLVLCIFLFLL.

Its subcellular location is the cell membrane. This is an uncharacterized protein from Arabidopsis thaliana (Mouse-ear cress).